Consider the following 292-residue polypeptide: MARCERLRGAALRDVLGQAQGVLFDCDGVLWNGERIVPGAPELLQRLARAGKNTLFVSNNSRRARPELALRFARLGFAGLRAEQLFSSALCAARLLRQRLSGPPDASGAVFVLGGEGLRAELRAAGLRLAGDPGEDPRVRAVLVGYDEQFSFSRLTEACAHLRDPDCLLVATDRDPWHPLSDGSRTPGTGSLAAAVETASGRQALVVGKPSPYMFQCITEDFSVDPARTLMVGDRLETDILFGHRCGMTTVLTLTGVSSLEEAQAYLTAGQRDLVPHYYVESIADLMEGLED.

The active-site Nucleophile is aspartate 25. Residues aspartate 25 and aspartate 27 each coordinate Mg(2+). Residue aspartate 27 is the Proton donor of the active site. Substrate-binding positions include 58–60, histidine 178, and lysine 209; that span reads SNN. A Mg(2+)-binding site is contributed by aspartate 234.

It belongs to the HAD-like hydrolase superfamily. In terms of assembly, homodimer. It depends on Mg(2+) as a cofactor. In terms of tissue distribution, ubiquitous. highly expressed in brain (at protein level).

Its subcellular location is the cytoplasm. It localises to the cytosol. It is found in the cytoskeleton. The protein resides in the cell projection. The protein localises to the ruffle membrane. Its subcellular location is the lamellipodium membrane. It localises to the cell membrane. The enzyme catalyses pyridoxal 5'-phosphate + H2O = pyridoxal + phosphate. It carries out the reaction pyridoxine 5'-phosphate + H2O = pyridoxine + phosphate. It catalyses the reaction pyridoxamine + phosphate = pyridoxamine 5'-phosphate + H2O. The catalysed reaction is O-phospho-L-seryl-[protein] + H2O = L-seryl-[protein] + phosphate. With respect to regulation, inhibited by beryllium trifluoride. Functions as a pyridoxal phosphate (PLP) phosphatase, which also catalyzes the dephosphorylation of pyridoxine 5'-phosphate (PNP) and pyridoxamine 5'-phosphate (PMP), with order of substrate preference PLP &gt; PNP &gt; PMP and therefore plays a role in vitamin B6 metabolism. Also functions as a protein serine phosphatase that specifically dephosphorylates 'Ser-3' in proteins of the actin-depolymerizing factor (ADF)/cofilin family like CFL1 and DSTN. Thereby, regulates cofilin-dependent actin cytoskeleton reorganization, being required for normal progress through mitosis and normal cytokinesis. Does not dephosphorylate phosphothreonines in LIMK1. Does not dephosphorylate peptides containing phosphotyrosine. The sequence is that of Chronophin from Mus musculus (Mouse).